A 244-amino-acid polypeptide reads, in one-letter code: Securin-like protein (244 aa).

The disordered stretch occupies residues 31-53; it reads ELEKTPSRGGLGLVVNSSKTPGG.

As to quaternary structure, forms a complex (via C-terminus) with separase sep-1. Interaction with ify-1 stabilizes sep-1. Also maintains the complex in the cytoplasm during interphase and recruits it to chromosomes during the first meiotic division. Interacts with E3 ubiquitin-protein ligase etc-1. Post-translationally, ubiquitinated by etc-1 likely at the onset of anaphase, resulting in its degradation. Expressed in germ cells including oocytes.

Its subcellular location is the cytoplasm. The protein localises to the chromosome. The protein resides in the cytoskeleton. It is found in the spindle. In terms of biological role, acts as a chaperone and as an inhibitor for separase sep-1. Plays an essential role in maintaining chromosome cohesion prior to meiotic and mitotic anaphase, in cytokinesis and in organizing the spindle and the centrosome. Ubiquitination-dependent degradation at the onset of anaphase is likely to activate sep-1 resulting in the proteolysis of the cohesin complex and the subsequent segregation of the chromosomes. Also required for cortical granule exocytosis. This Caenorhabditis elegans protein is Securin-like protein.